The sequence spans 665 residues: Prelamin-A/C (665 aa).

The residue at position 1 (M1) is an N-acetylmethionine. Positions 1–27 (METPSQRRPTRSGAQASSTPLSPTRIT) are disordered. A head region spans residues 1–33 (METPSQRRPTRSGAQASSTPLSPTRITRLQEKE). Residues 1 to 130 (METPSQRRPT…TKKEGDLLAA (130 aa)) form an interaction with MLIP region. T3 bears the Phosphothreonine mark. S5 carries the post-translational modification Phosphoserine. T10 is subject to Phosphothreonine. 2 positions are modified to phosphoserine: S12 and S18. At T19 the chain carries Phosphothreonine. Residue S22 is modified to Phosphoserine. The IF rod domain occupies 31–387 (EKEDLQELND…KLLEGEEERL (357 aa)). K32 is subject to N6-acetyllysine; alternate. At K32 the chain carries N6-succinyllysine; alternate. K32 is covalently cross-linked (Glycyl lysine isopeptide (Lys-Gly) (interchain with G-Cter in SUMO2); alternate). The interval 34-70 (DLQELNDRLAVYIDRVRSLETENAGLRLRITESEEVV) is coil 1A. Phosphoserine occurs at positions 51, 66, and 71. The tract at residues 71–80 (SREVSGIKAA) is linker 1. N6-acetyllysine is present on residues K78 and K97. The coil 1B stretch occupies residues 81-218 (YEAELGDARK…NIYSEELRET (138 aa)). K97 is covalently cross-linked (Glycyl lysine isopeptide (Lys-Gly) (interchain with G-Cter in SUMO2)). Phosphoserine is present on S107. An N6-acetyllysine mark is found at K108, K114, K123, K135, K144, and K155. K171 is modified (N6-acetyllysine; alternate). K171 is modified (N6-succinyllysine; alternate). K171 is covalently cross-linked (Glycyl lysine isopeptide (Lys-Gly) (interchain with G-Cter in SUMO2); alternate). 3 positions are modified to N6-acetyllysine: K180, K201, and K208. K201 is covalently cross-linked (Glycyl lysine isopeptide (Lys-Gly) (interchain with G-Cter in SUMO2); alternate). Residue K201 forms a Glycyl lysine isopeptide (Lys-Gly) (interchain with G-Cter in SUMO); alternate linkage. K208 participates in a covalent cross-link: Glycyl lysine isopeptide (Lys-Gly) (interchain with G-Cter in SUMO2). The residue at position 212 (S212) is a Phosphoserine. Glycyl lysine isopeptide (Lys-Gly) (interchain with G-Cter in SUMO2) cross-links involve residues K219 and K233. The interval 219–242 (KRRHETRLVEIDNGKQREFESRLA) is linker 2. N6-acetyllysine occurs at positions 233, 260, 265, and 270. The interval 243–383 (DALQELRAQH…HAYRKLLEGE (141 aa)) is coil 2. K260 participates in a covalent cross-link: Glycyl lysine isopeptide (Lys-Gly) (interchain with G-Cter in SUMO2); alternate. Residue K270 forms a Glycyl lysine isopeptide (Lys-Gly) (interchain with G-Cter in SUMO2); alternate linkage. Residues S277, S282, S301, and S307 each carry the phosphoserine modification. K311 participates in a covalent cross-link: Glycyl lysine isopeptide (Lys-Gly) (interchain with G-Cter in SUMO2); alternate. 3 positions are modified to N6-acetyllysine: K311, K316, and K341. Glycyl lysine isopeptide (Lys-Gly) (interchain with G-Cter in SUMO2) cross-links involve residues K366 and K378. Residues 384–442 (EERLRLSPSPTSQRSRGRASSHSSQSQGGGSVTKKRKLESSESRSSFSQHARTSGRVAV) form a disordered region. A tail region spans residues 384–665 (EERLRLSPSP…TQSSQNCSIM (282 aa)). Residues S390, S392, S395, S398, S403, S404, S406, S407, S409, and S414 each carry the phosphoserine modification. The segment covering 395-409 (SQRSRGRASSHSSQS) has biased composition (low complexity). At T416 the chain carries Phosphothreonine. K417 is modified (N6-acetyllysine). Glycyl lysine isopeptide (Lys-Gly) (interchain with G-Cter in SUMO2) cross-links involve residues K417 and K420. A Nuclear localization signal motif is present at residues 417–422 (KKRKLE). Phosphoserine occurs at positions 423, 426, 429, and 431. In terms of domain architecture, LTD spans 428–545 (SSFSQHARTS…EEVAMRKLVR (118 aa)). K450 is covalently cross-linked (Glycyl lysine isopeptide (Lys-Gly) (interchain with G-Cter in SUMO2); alternate). 2 positions are modified to N6-acetyllysine: K450 and K457. 2 positions are modified to phosphoserine: S458 and S463. Residues K470 and K486 each participate in a glycyl lysine isopeptide (Lys-Gly) (interchain with G-Cter in SUMO2) cross-link. K486 carries the N6-acetyllysine modification. At T496 the chain carries Phosphothreonine. Residue S500 is modified to Phosphoserine. A phosphothreonine mark is found at T505 and T510. S546 carries the phosphoserine modification. T548 is subject to Phosphothreonine. A compositionally biased stretch (acidic residues) spans 552–561 (DNDDEEEDGD). The tract at residues 552-577 (DNDDEEEDGDELLHHHRGSHCSSSGD) is disordered. Phosphoserine is present on residues S570 and S573. K599 participates in a covalent cross-link: Glycyl lysine isopeptide (Lys-Gly) (interchain with G-Cter in SUMO2); alternate. K599 participates in a covalent cross-link: Glycyl lysine isopeptide (Lys-Gly) (interchain with G-Cter in SUMO1); alternate. 4 positions are modified to phosphoserine: S613, S614, S617, and S620. O-linked (GlcNAc) serine glycosylation is found at S626 and S629. 4 positions are modified to phosphoserine: S629, S633, S637, and S653. Residues 648-662 (LLGNSSPRTQSSQNC) constitute a propeptide, removed in Lamin-A/C form. C662 bears the Cysteine methyl ester mark. C662 carries the S-farnesyl cysteine lipid modification. Residues 663–665 (SIM) constitute a propeptide, removed in Prelamin-A/C form and in Lamin-A/C form.

It belongs to the intermediate filament family. Homodimer of lamin A and lamin C. Lamin dimers then assemble into dimeric head-to-tail polymers. Ultimately, two head-to-tail polymers assemble laterally into a protofilament with a uniformly shaped rod of 3.5 nm in diameter. Interacts with lamin-associated polypeptides IA, IB and TMPO-alpha, RB1 and with emerin. Interacts with SREBF1, SREBF2, SUN2 and TMEM43. Interacts with TMEM201. Proteolytically processed isoform A interacts with NARF. Interacts with SUN1. Interacts with MLIP. Interacts with DMPK; may regulate nuclear envelope stability. Interacts with SUV39H1; the interaction increases stability of SUV39H1. Interacts with SYNE2. Interacts with ITSN1 isoform 2. Interacts with IFFO1; enables the formation of an interior nucleoskeleton that is recruited to DNA double-strand breaks. As to quaternary structure, interacts with EMD. In terms of assembly, interacts (via C-terminus) with LEMD2 (via N-terminus) (in vitro). Proteolytic cleavage of the C-terminal of 18 residues of prelamin-A/C results in the production of lamin-A/C. The prelamin-A/C maturation pathway includes farnesylation of CAAX motif by protein farnesyltransferase (FNTA and FNTB), removal of the last three amino acids (-AAX) by RCE1/FACE2 and/or ZMPSTE24, methylation of the C-terminal cysteine by ICMT and endoproteolytic removal of the last 15 C-terminal amino acids by ZMPSTE24. Proteolytic cleavage requires prior farnesylation and methylation, and absence of these blocks cleavage. Post-translationally, farnesylation of prelamin-A/C facilitates nuclear envelope targeting. In terms of processing, phosphorylation plays a key role in lamin organization, subcellular localization and nuclear envelope disintegration. Phosphorylation by CDK1 at Ser-22 and Ser-392 at the onset of mitosis drives lamin disassembly and nuclear envelope breakdown. Phosphorylation at Ser-22 and Ser-392 during interphase promotes localization to the nucleoplasm and regulates lamina assembly. Phosphorylation at Ser-22, Ser-392 and Ser-629 during interphase causes redistribution between the nucleus and the cytoplasm. Phosphorylation at Ser-22 by CDK1 regulates matrix stiffness. Phosphorylation status of Ser-22 determines its localization between double-strand break (DSB) sites and the nuclear matrix. Phosphorylated by ATR at Ser-282 in response to DNA damage, leading to lamin disassembly and nuclear envelope rupture. Phosphorylation also regulates stability in micronuclei arising from genome instability: phosphorylation at Ser-395 by ATR in response to genome instability and double-stranded DNA breaks primes LMNA for subsequent phosphorylation at Ser-392 by CDK1 and micronuclei envelope rupture. The rupture of micronuclear envelope triggers the cGAS-STING pathway thereby activating the type I interferon response and innate immunity. Acetylation by KAT8 is required for nuclear architecture. Post-translationally, sumoylation is necessary for the localization to the nuclear envelope.

It is found in the nucleus lamina. The protein resides in the nucleus envelope. The protein localises to the nucleus. Its subcellular location is the nucleoplasm. It localises to the nucleus matrix. Its function is as follows. Lamins are intermediate filament proteins that assemble into a filamentous meshwork, and which constitute the major components of the nuclear lamina, a fibrous layer on the nucleoplasmic side of the inner nuclear membrane. Lamins provide a framework for the nuclear envelope, bridging the nuclear envelope and chromatin, thereby playing an important role in nuclear assembly, chromatin organization, nuclear membrane and telomere dynamics. Lamin A and C also regulate matrix stiffness by conferring nuclear mechanical properties. The structural integrity of the lamina is strictly controlled by the cell cycle, as seen by the disintegration and formation of the nuclear envelope in prophase and telophase, respectively. Lamin A and C are present in equal amounts in the lamina of mammals. Also invoved in DNA repair: recruited by DNA repair proteins XRCC4 and IFFO1 to the DNA double-strand breaks (DSBs) to prevent chromosome translocation by immobilizing broken DNA ends. Required for normal development of peripheral nervous system and skeletal muscle and for muscle satellite cell proliferation. Required for osteoblastogenesis and bone formation. Also prevents fat infiltration of muscle and bone marrow, helping to maintain the volume and strength of skeletal muscle and bone. Required for cardiac homeostasis. Prelamin-A/C can accelerate smooth muscle cell senescence. It acts to disrupt mitosis and induce DNA damage in vascular smooth muscle cells (VSMCs), leading to mitotic failure, genomic instability, and premature senescence. This Rattus norvegicus (Rat) protein is Prelamin-A/C (Lmna).